A 324-amino-acid chain; its full sequence is Cuticle collagen lon-3 (324 aa).

Residues 1–30 (MSVTTATSGALIFSGASLLVSLFAAASIYS) form the signal peptide. Residues 119 to 324 (VENTCPTGPD…AWRRKHKRVY (206 aa)) are disordered. 3 triple-helical region regions span residues 129-152 (GEEGEQGPDGQDGVDGVPGFDGQD), 170-229 (GLPG…KGDD), and 235-294 (GRQG…SGLP). 5 stretches are compositionally biased toward low complexity: residues 136 to 151 (PDGQDGVDGVPGFDGQ), 168 to 181 (PQGLPGPQGSQGAP), 210 to 223 (PTGAPGDDGAPGAS), 235 to 246 (GRQGQRGQPGEQ), and 261 to 273 (EGPPGVEGEVGVP). Positions 296 to 311 (KDAEYCKCPTRDDGGN) are enriched in basic and acidic residues. Residues 314–324 (RAWRRKHKRVY) are compositionally biased toward basic residues.

The protein belongs to the cuticular collagen family. In terms of assembly, collagen polypeptide chains are complexed within the cuticle by disulfide bonds and other types of covalent cross-links.

In terms of biological role, nematode cuticles are composed largely of collagen-like proteins. The cuticle functions both as an exoskeleton and as a barrier to protect the worm from its environment. Dose-dependent regulator of body length and shape. The chain is Cuticle collagen lon-3 (lon-3) from Caenorhabditis elegans.